A 249-amino-acid polypeptide reads, in one-letter code: Putative ABC transporter ATP-binding protein GSU1281 (249 aa).

The ABC transporter domain occupies 6–236; it reads VEVRDLCHCY…DELLATCRLE (231 aa). 39 to 46 contacts ATP; sequence GANGAGKS.

It belongs to the ABC transporter superfamily.

The protein localises to the cell inner membrane. In terms of biological role, probably part of an ABC transporter complex. Responsible for energy coupling to the transport system. The protein is Putative ABC transporter ATP-binding protein GSU1281 of Geobacter sulfurreducens (strain ATCC 51573 / DSM 12127 / PCA).